Reading from the N-terminus, the 161-residue chain is Arachidonate 5-lipoxygenase-activating protein (161 aa).

The Lumenal portion of the chain corresponds to 1 to 8 (MDQEAVGN). A helical membrane pass occupies residues 9–30 (VVLLAIVTLISVVQNAFFAHKV). Over 31 to 52 (ELESKAQSGRSFQRTGTLAFER) the chain is Cytoplasmic. A helical transmembrane segment spans residues 53–77 (VYTANQNCVDAYPTFLVVLWTAGLL). Over 78-80 (CSQ) the chain is Lumenal. The helical transmembrane segment at 81-102 (VPAAFAGLMYLFVRQKYFVGYL) threads the bilayer. Topologically, residues 103 to 107 (GERTQ) are cytoplasmic. An intramembrane segment occupies 108 to 115 (STPGYIFG). Residues 116 to 128 (KRIILFLFLMSLA) form a helical membrane-spanning segment. Residues 129–161 (GILNHYLIFFFGSDFENYIRTITTTISPLLLIP) are Lumenal-facing.

This sequence belongs to the MAPEG family. In terms of assembly, homotrimer. Interacts with LTC4S and ALOX5.

It is found in the nucleus membrane. Its subcellular location is the endoplasmic reticulum membrane. In terms of biological role, required for leukotriene biosynthesis by ALOX5 (5-lipoxygenase). Anchors ALOX5 to the membrane. Binds arachidonic acid, and could play an essential role in the transfer of arachidonic acid to ALOX5. Binds to MK-886, a compound that blocks the biosynthesis of leukotrienes. The sequence is that of Arachidonate 5-lipoxygenase-activating protein (Alox5ap) from Rattus norvegicus (Rat).